The primary structure comprises 477 residues: Glutamate--tRNA ligase (477 aa).

The short motif at 8-18 (PSPTGTLHIGT) is the 'HIGH' region element. The 'KMSKS' region motif lies at 247–251 (KLSKR). Lysine 250 is an ATP binding site.

Belongs to the class-I aminoacyl-tRNA synthetase family. Glutamate--tRNA ligase type 1 subfamily. In terms of assembly, monomer.

It localises to the cytoplasm. It carries out the reaction tRNA(Glu) + L-glutamate + ATP = L-glutamyl-tRNA(Glu) + AMP + diphosphate. Functionally, catalyzes the attachment of glutamate to tRNA(Glu) in a two-step reaction: glutamate is first activated by ATP to form Glu-AMP and then transferred to the acceptor end of tRNA(Glu). In Synechococcus sp. (strain CC9902), this protein is Glutamate--tRNA ligase.